A 722-amino-acid chain; its full sequence is A-type ATP synthase subunit I (722 aa).

Positions 309–321 (DYKPTGHDQHVPA) are enriched in basic and acidic residues. Positions 309-352 (DYKPTGHDQHVPADDGADAATDGGTTASFDETDSPPVIQDNPGP) are disordered. A compositionally biased stretch (low complexity) spans 326–335 (DAATDGGTTA). 8 helical membrane-spanning segments follow: residues 384 to 404 (FYGFMIGDLGYGVLYALLGFW), 419 to 439 (GVAMWAGGFTALFGVLYGEVF), 474 to 494 (LAASLVFGIAHLAIGYVFGFV), 505 to 525 (AALESGGQLLLMAGVGVWLFS), 554 to 574 (LAAAVVGLVLVTLGEGAAGFL), 590 to 610 (IAAVLLAKAGMAYVVNLLVFG), 639 to 659 (FMLFSGEAHGEVLFPGLMHMG), and 662 to 682 (GILIGVLVLLVGHALVLALGV).

Belongs to the V-ATPase 116 kDa subunit family. In terms of assembly, has multiple subunits with at least A(3), B(3), C, D, E, F, H, I and proteolipid K(x).

Its subcellular location is the cell membrane. Its function is as follows. Component of the A-type ATP synthase that produces ATP from ADP in the presence of a proton gradient across the membrane. The polypeptide is A-type ATP synthase subunit I (Halobacterium salinarum (strain ATCC 700922 / JCM 11081 / NRC-1) (Halobacterium halobium)).